The sequence spans 147 residues: Hemoglobin subunit epsilon (147 aa).

Residues 3–147 (HFTAEEKNAI…VANALAHKYH (145 aa)) form the Globin domain. S51 carries the post-translational modification Phosphoserine. Heme b is bound by residues H64 and H93.

Belongs to the globin family. In terms of assembly, heterotetramer of two alpha chains and two epsilon chains in early embryonic hemoglobin Gower-2; two zeta chains and two epsilon chains in early embryonic hemoglobin Gower-1. Red blood cells.

In terms of biological role, the epsilon chain is a beta-type chain of early mammalian embryonic hemoglobin. This is Hemoglobin subunit epsilon (HBE1) from Sminthopsis crassicaudata (Fat-tailed dunnart).